Here is a 1616-residue protein sequence, read N- to C-terminus: S-layer-related protein (1616 aa).

The N-terminal stretch at 1 to 30 is a signal peptide; the sequence is MKSLLRKWNGMMIIALVISLLTPAWGKASA. The region spanning 1115-1185 is the BIG2 domain; sequence VKALKLDRGT…GSGTVQATYE (71 aa). Disordered stretches follow at residues 1191–1244, 1372–1455, 1523–1554, and 1585–1616; these read ARVS…DGRN, NKRN…GRAR, ARGR…REAG, and FAGG…ARPC. Residues 1199-1225 show a composition bias toward gly residues; sequence STGGGSDTGSGTGSGSGGGSAGGGGTA. The segment covering 1372–1387 has biased composition (basic residues); it reads NKRNRRLRKLRPKNRK. Positions 1406–1416 are enriched in low complexity; the sequence is PPECSASCPPA. Positions 1438–1502 constitute an SLH domain; the sequence is WSPPRSASPT…ALDPAPAAAD (65 aa). Over residues 1536–1554 the composition is skewed to basic and acidic residues; that stretch reads RGADTRTDERDAHARREAG. Residues 1594 to 1616 show a composition bias toward basic residues; it reads GRTRGRTLRARPARLPVRKARPC.

The protein resides in the secreted. The protein localises to the cell wall. It is found in the S-layer. The S-layer is a paracrystalline mono-layered assembly of proteins which coats the surface of bacteria. May play a role in the export of butirosin from the organism. The protein is S-layer-related protein (butB) of Niallia circulans (Bacillus circulans).